Reading from the N-terminus, the 880-residue chain is Protein transport protein SEC23 A (880 aa).

Residues 1–13 (MANLPKSSVNYPG) are compositionally biased toward polar residues. The tract at residues 1–95 (MANLPKSSVN…PPGPPVFNTP (95 aa)) is disordered. Residues 20–36 (PNRPSPQPDRTPVPHSP) are compositionally biased toward pro residues. The span at 57 to 70 (MSSPSMKSPSLLSP) shows a compositional bias: low complexity. Residues C204, C207, C226, and C229 each coordinate Zn(2+). Residues 204–229 (CLNCGAYSNPYSSILIGSGQWQCVIC) are zinc finger-like.

This sequence belongs to the SEC23/SEC24 family. SEC24 subfamily. Component of the coat protein complex II (COPII), composed of at least five proteins: the Sec23/24 complex, the Sec13/31 complex and Sar1. Mostly expressed in seedlings, roots, cotyledons, leaves, trichomes, leaf primordia and flowers, and, to a lower extent, in mature siliques.

The protein resides in the cytoplasmic vesicle. The protein localises to the COPII-coated vesicle membrane. Its subcellular location is the endoplasmic reticulum membrane. It localises to the membrane. Component of the coat protein complex II (COPII) which promotes the formation of transport vesicles from the endoplasmic reticulum (ER). The coat has two main functions, the physical deformation of the endoplasmic reticulum membrane into vesicles and the selection of cargo molecules. May contribute to COPII-coated vesicles formation and ER-Golgi vesicle transport. Together with SEC23D, essential for pollen wall development and exine patterning, probably by regulating endoplasmic reticulum (ER) export of lipids and proteins (e.g. sporopollenin) necessary for pollen wall formation. Also involved in plastid physiology in anther tapetal cells. This is Protein transport protein SEC23 A from Arabidopsis thaliana (Mouse-ear cress).